A 260-amino-acid polypeptide reads, in one-letter code: Snake venom serine protease homolog (260 aa).

Positions 1–18 are cleaved as a signal peptide; sequence MVLVRVLANLLMLQLSYA. A propeptide spanning residues 19–24 is cleaved from the precursor; that stretch reads QKSSEL. In terms of domain architecture, Peptidase S1 spans 25 to 251; it reads IIGGDECNIN…HLNWIQSIIA (227 aa). 6 disulfide bridges follow: Cys31–Cys165, Cys52–Cys68, Cys100–Cys258, Cys144–Cys212, Cys176–Cys191, and Cys202–Cys227. Residues Asn123 and Asn124 are each glycosylated (N-linked (GlcNAc...) asparagine). Asn253 carries an N-linked (GlcNAc...) asparagine glycan.

Belongs to the peptidase S1 family. Snake venom subfamily. Expressed by the venom gland.

The protein resides in the secreted. Functionally, snake venom serine protease homolog that may act in the hemostasis system of the prey. The polypeptide is Snake venom serine protease homolog (Protobothrops jerdonii (Jerdon's pitviper)).